We begin with the raw amino-acid sequence, 82 residues long: Protein Vpu (82 aa).

The Extracellular segment spans residues 1 to 7 (MQPLQIS). The helical transmembrane segment at 8-28 (AIVALVVAAIIAIVVWSIALL) threads the bilayer. Residues 29 to 82 (EYRKLLRQRKIDRLIDRIRERAEDSGNESEGDQEELSALVEMGGHDAPWDIDDL) lie on the Cytoplasmic side of the membrane. Residues S53 and S57 each carry the phosphoserine; by host CK2 modification.

Belongs to the HIV-1 VPU protein family. As to quaternary structure, homopentamer. Interacts with host CD4 and BRTC; these interactions induce proteasomal degradation of CD4. Interacts with host BST2; this interaction leads to the degradation of host BST2. Interacts with host FBXW11. Interacts with host AP1M1; this interaction plays a role in the mistrafficking and subsequent degradation of host BST2. Interacts with host RANBP2; this interaction allows Vpu to down-regulate host BLM sumoylation. In terms of processing, phosphorylated by host CK2. This phosphorylation is necessary for interaction with human BTRC and degradation of CD4.

It is found in the host membrane. With respect to regulation, ion channel activity is inhibited by hexamethylene amiloride in vitro. Its function is as follows. Enhances virion budding by targeting host CD4 and Tetherin/BST2 to proteasome degradation. Degradation of CD4 prevents any unwanted premature interactions between viral Env and its host receptor CD4 in the endoplasmic reticulum. Degradation of antiretroviral protein Tetherin/BST2 is important for virion budding, as BST2 tethers new viral particles to the host cell membrane. Mechanistically, Vpu bridges either CD4 or BST2 to BTRC, a substrate recognition subunit of the Skp1/Cullin/F-box protein E3 ubiquitin ligase, induces their ubiquitination and subsequent proteasomal degradation. The alteration of the E3 ligase specificity by Vpu seems to promote the degradation of host IKBKB, leading to NF-kappa-B down-regulation and subsequent apoptosis. Acts as a viroporin that forms an oligomeric ion channel in membranes. Modulates the host DNA repair mechanisms to promote degradation of nuclear viral cDNA in cells that are already productively infected in order to suppress immune sensing and proviral hyper-integration (superinfection). Manipulates PML-NBs and modulates SUMOylation of host BLM protein thereby enhancing its DNA-end processing activity toward viral unintegrated linear DNA. Also inhibits RAD52-mediated homologous repair of viral cDNA, preventing the generation of dead-end circular forms of single copies of the long terminal repeat and permitting sustained nucleolytic attack. The protein is Protein Vpu of Homo sapiens (Human).